A 518-amino-acid chain; its full sequence is Ribonuclease Y (518 aa).

Residues G2–V22 form a helical membrane-spanning segment. Residues T208–L271 enclose the KH domain. The HD domain occupies V334–A427.

Belongs to the RNase Y family.

The protein resides in the cell membrane. Endoribonuclease that initiates mRNA decay. This Geobacillus kaustophilus (strain HTA426) protein is Ribonuclease Y.